Consider the following 119-residue polypeptide: Large ribosomal subunit protein bL19 (119 aa).

Belongs to the bacterial ribosomal protein bL19 family.

This protein is located at the 30S-50S ribosomal subunit interface and may play a role in the structure and function of the aminoacyl-tRNA binding site. The chain is Large ribosomal subunit protein bL19 from Pseudoalteromonas atlantica (strain T6c / ATCC BAA-1087).